The chain runs to 446 residues: Coagulation factor VII (446 aa).

An N-terminal signal peptide occupies residues methionine 1–valine 24. Residues valine 25–arginine 41 constitute a propeptide that is removed on maturation. The 45-residue stretch at alanine 42–serine 86 folds into the Gla domain. 4-carboxyglutamate is present on residues glutamate 47, glutamate 48, glutamate 55, glutamate 57, glutamate 60, glutamate 61, glutamate 66, glutamate 67, glutamate 70, and glutamate 76. A disulfide bridge connects residues cysteine 58 and cysteine 63. One can recognise an EGF-like 1; calcium-binding domain in the interval aspartate 87–glutamate 123. 10 cysteine pairs are disulfide-bonded: cysteine 91–cysteine 102, cysteine 96–cysteine 111, cysteine 113–cysteine 122, cysteine 132–cysteine 143, cysteine 139–cysteine 153, cysteine 155–cysteine 168, cysteine 176–cysteine 303, cysteine 200–cysteine 205, cysteine 219–cysteine 235, and cysteine 351–cysteine 370. Serine 93 is a glycosylation site (O-linked (Glc...) serine; alternate). Serine 93 carries O-linked (Xyl...) serine; alternate glycosylation. O-linked (Fuc) threonine glycosylation occurs at threonine 101. (3R)-3-hydroxyaspartate is present on aspartate 104. The region spanning glutamate 128 to lysine 169 is the EGF-like 2 domain. Asparagine 186 carries N-linked (GlcNAc...) asparagine glycosylation. The region spanning isoleucine 194–aspartate 433 is the Peptidase S1 domain. Residue histidine 234 is the Charge relay system of the active site. An N-linked (GlcNAc...) asparagine glycan is attached at asparagine 244. Aspartate 283 (charge relay system) is an active-site residue. Aspartate 379 contributes to the substrate binding site. Cysteine 381 and cysteine 409 are disulfide-bonded. Serine 385 (charge relay system) is an active-site residue.

It belongs to the peptidase S1 family. As to quaternary structure, heterodimer of a light chain and a heavy chain linked by a disulfide bond. Post-translationally, the vitamin K-dependent, enzymatic carboxylation of some glutamate residues allows the modified protein to bind calcium. The iron and 2-oxoglutarate dependent 3-hydroxylation of aspartate and asparagine is (R) stereospecific within EGF domains. In terms of processing, can be either O-glucosylated or O-xylosylated at Ser-93 by POGLUT1. In terms of tissue distribution, plasma.

Its subcellular location is the secreted. It catalyses the reaction Selective cleavage of Arg-|-Ile bond in factor X to form factor Xa.. Initiates the extrinsic pathway of blood coagulation. Serine protease that circulates in the blood in a zymogen form. Factor VII is converted to factor VIIa by factor Xa, factor XIIa, factor IXa, or thrombin by minor proteolysis. In the presence of tissue factor and calcium ions, factor VIIa then converts factor X to factor Xa by limited proteolysis. Factor VIIa also converts factor IX to factor IXa in the presence of tissue factor and calcium. This Rattus norvegicus (Rat) protein is Coagulation factor VII (F7).